The following is a 129-amino-acid chain: Histone H2B.2 (129 aa).

The segment covering 1–19 (MAPKAEKKPASKAPAEKKP) has biased composition (basic and acidic residues). Residues 1 to 37 (MAPKAEKKPASKAPAEKKPAAKKTASSDSKKRTKTRK) are disordered. An N6-acetyllysine; alternate mark is found at Lys-7 and Lys-8. Residues Lys-7 and Lys-8 each participate in a glycyl lysine isopeptide (Lys-Gly) (interchain with G-Cter in SUMO); alternate cross-link. A Phosphoserine modification is found at Ser-11. Lys-12 carries the post-translational modification N6-acetyllysine. Lys-17 is modified (N6-acetyllysine; alternate). Residue Lys-17 forms a Glycyl lysine isopeptide (Lys-Gly) (interchain with G-Cter in SUMO); alternate linkage. Residue Lys-18 forms a Glycyl lysine isopeptide (Lys-Gly) (interchain with G-Cter in SUMO) linkage. Lys-123 participates in a covalent cross-link: Glycyl lysine isopeptide (Lys-Gly) (interchain with G-Cter in ubiquitin).

This sequence belongs to the histone H2B family. As to quaternary structure, the nucleosome is a histone octamer containing two molecules each of H2A, H2B, H3 and H4 assembled in one H3-H4 heterotetramer and two H2A-H2B heterodimers. The octamer wraps approximately 147 bp of DNA. Monoubiquitinated by the UBC2-BRE1 complex to form H2BK123ub1. H2BK123ub1 gives a specific tag for epigenetic transcriptional activation and is also prerequisite for H3K4me and H3K79me formation. H2BK123ub1 also modulates the formation of double-strand breaks during meiosis and is a prerequisite for DNA-damage checkpoint activation. In terms of processing, phosphorylated by STE20 to form H2BS10ph during progression through meiotic prophase. May be correlated with chromosome condensation. Post-translationally, acetylated by GCN5 to form H2BK11ac and H2BK16ac. H2BK16ac can also be formed by ESA1. Acetylation of N-terminal lysines and particularly formation of H2BK11acK16ac has a positive effect on transcription. Sumoylation to form H2BK6su or H2BK7su, and probably also H2BK16su or H2BK17su, occurs preferentially near the telomeres and represses gene transcription.

The protein resides in the nucleus. It localises to the chromosome. Functionally, core component of nucleosome. Nucleosomes wrap and compact DNA into chromatin, limiting DNA accessibility to the cellular machineries which require DNA as a template. Histones thereby play a central role in transcription regulation, DNA repair, DNA replication and chromosomal stability. DNA accessibility is regulated via a complex set of post-translational modifications of histones, also called histone code, and nucleosome remodeling. This chain is Histone H2B.2 (HTB2), found in Meyerozyma guilliermondii (strain ATCC 6260 / CBS 566 / DSM 6381 / JCM 1539 / NBRC 10279 / NRRL Y-324) (Yeast).